Consider the following 262-residue polypeptide: Ribosome maturation factor RimP (262 aa).

The disordered stretch occupies residues 197–262 (RELGVLPPPP…LGQTDPTEGD (66 aa)). The span at 223–233 (KLPKAKLKAAK) shows a compositional bias: basic residues. Basic and acidic residues predominate over residues 240–254 (TKEHRLAAAERKRLG).

Belongs to the RimP family.

It localises to the cytoplasm. Functionally, required for maturation of 30S ribosomal subunits. This is Ribosome maturation factor RimP from Rhodopseudomonas palustris (strain BisB18).